A 269-amino-acid chain; its full sequence is Tryptophan synthase alpha chain (269 aa).

Residues Glu-50 and Asp-61 each act as proton acceptor in the active site.

Belongs to the TrpA family. Tetramer of two alpha and two beta chains.

It carries out the reaction (1S,2R)-1-C-(indol-3-yl)glycerol 3-phosphate + L-serine = D-glyceraldehyde 3-phosphate + L-tryptophan + H2O. It functions in the pathway amino-acid biosynthesis; L-tryptophan biosynthesis; L-tryptophan from chorismate: step 5/5. Its function is as follows. The alpha subunit is responsible for the aldol cleavage of indoleglycerol phosphate to indole and glyceraldehyde 3-phosphate. This chain is Tryptophan synthase alpha chain, found in Francisella tularensis subsp. tularensis (strain FSC 198).